The following is a 484-amino-acid chain: Coronin-1B (484 aa).

A Phosphoserine modification is found at Ser2. WD repeat units lie at residues 80 to 120, 130 to 170, 174 to 213, 217 to 260, and 265 to 305; these read GHTG…LTSP, GHTK…ELYR, LHPD…LVAE, AHEG…EPMA, and DSSN…PYIH. Residues 404–446 form a disordered region; the sequence is LKVSRRNVLSDSRPASYSRSGASTATAVTDVPSGNLAGAGEAG. Over residues 410–430 the composition is skewed to polar residues; that stretch reads NVLSDSRPASYSRSGASTATA. The stretch at 444 to 482 forms a coiled coil; it reads EAGKLEEVMQELRALRMLVKEQGERISRLEEQLGRMENG.

The protein belongs to the WD repeat coronin family. Forms homooligomers, but does not form complexes with the other coronins. Interacts with Arp2/3 complex components, including ACTR2, ARPC1B and ARPC2. Binds actin. Post-translationally, phosphorylation on Ser-2 regulates the interaction with the Arp2/3 complex and cell motility in fibroblasts. Phosphorylation does not seem to affect subcellular location. As to expression, ubiquitous.

It localises to the cytoplasm. The protein resides in the cytoskeleton. Its subcellular location is the stress fiber. Its function is as follows. Regulates leading edge dynamics and cell motility in fibroblasts. May be involved in cytokinesis and signal transduction. The protein is Coronin-1B (Coro1b) of Mus musculus (Mouse).